A 373-amino-acid polypeptide reads, in one-letter code: MTEVPWSVVPNGTDAAFLAGLGSLWGNSTVASTAAVSSSFQCALTKTGFQFYYLPAVYILVFIIGFLGNSVAIWMFVFHMKPWSGISVYMFNLALADFLYVLTLPALIFYYFNKTDWIFGDAMCKLQRFIFHVNLYGSILFLTCISAHRYSGVVYPLKSLGRLKKKNAIYVSVLVWLIVVVAISPILFYSGTGTRKNKTVTCYDTTSNDYLRSYFIYSMCTTVAMFCIPLVLILGCYGLIVKALIYNDLDNSPLRRKSIYLVIIVLTVFAVSYIPFHVMKTMNLRARLDFQTPEMCDFNDRVYATYQVTRGLASLNSCVDPILYFLAGDTFRRRLSRATRKASRRSEANLQSKSEEMTLNILSEFKQNGDTSL.

The Extracellular segment spans residues 1-51 (MTEVPWSVVPNGTDAAFLAGLGSLWGNSTVASTAAVSSSFQCALTKTGFQF). N-linked (GlcNAc...) asparagine glycans are attached at residues asparagine 11 and asparagine 27. Intrachain disulfides connect cysteine 42–cysteine 296 and cysteine 124–cysteine 202. Lysine 46 serves as a coordination point for ADP. A helical transmembrane segment spans residues 52–74 (YYLPAVYILVFIIGFLGNSVAIW). Over 75-87 (MFVFHMKPWSGIS) the chain is Cytoplasmic. The chain crosses the membrane as a helical span at residues 88–109 (VYMFNLALADFLYVLTLPALIF). Topologically, residues 110–125 (YYFNKTDWIFGDAMCK) are extracellular. Asparagine 113 is a glycosylation site (N-linked (GlcNAc...) asparagine). Residues 126–147 (LQRFIFHVNLYGSILFLTCISA) form a helical membrane-spanning segment. Residues 148-166 (HRYSGVVYPLKSLGRLKKK) lie on the Cytoplasmic side of the membrane. A helical transmembrane segment spans residues 167–188 (NAIYVSVLVWLIVVVAISPILF). Residues 189-214 (YSGTGTRKNKTVTCYDTTSNDYLRSY) lie on the Extracellular side of the membrane. The N-linked (GlcNAc...) asparagine glycan is linked to asparagine 197. An ADP-binding site is contributed by 203-205 (YDT). A helical membrane pass occupies residues 215-237 (FIYSMCTTVAMFCIPLVLILGCY). Over 238–260 (GLIVKALIYNDLDNSPLRRKSIY) the chain is Cytoplasmic. A helical transmembrane segment spans residues 261-284 (LVIIVLTVFAVSYIPFHVMKTMNL). Residues 283–287 (NLRAR), 303–306 (YATY), and arginine 310 contribute to the ADP site. The Extracellular segment spans residues 285 to 303 (RARLDFQTPEMCDFNDRVY). A helical transmembrane segment spans residues 304–325 (ATYQVTRGLASLNSCVDPILYF). Residues 326-373 (LAGDTFRRRLSRATRKASRRSEANLQSKSEEMTLNILSEFKQNGDTSL) are Cytoplasmic-facing.

The protein belongs to the G-protein coupled receptor 1 family.

It is found in the cell membrane. Functionally, receptor for extracellular adenine nucleotides such as ADP. In platelets, binding to ADP leads to mobilization of intracellular calcium ions via activation of phospholipase C, a change in platelet shape, and ultimately platelet aggregation. This chain is P2Y purinoceptor 1 (P2ry1), found in Mus musculus (Mouse).